The sequence spans 305 residues: tRNA uridine(34) hydroxylase (305 aa).

Positions 136 to 230 (ADENTVVVDK…YLEEVPREQS (95 aa)) constitute a Rhodanese domain. C190 (cysteine persulfide intermediate) is an active-site residue.

The protein belongs to the TrhO family.

It carries out the reaction uridine(34) in tRNA + AH2 + O2 = 5-hydroxyuridine(34) in tRNA + A + H2O. Its function is as follows. Catalyzes oxygen-dependent 5-hydroxyuridine (ho5U) modification at position 34 in tRNAs. This Brucella melitensis biotype 1 (strain ATCC 23456 / CCUG 17765 / NCTC 10094 / 16M) protein is tRNA uridine(34) hydroxylase.